Reading from the N-terminus, the 283-residue chain is Bifunctional protein FolD (283 aa).

NADP(+) contacts are provided by residues glycine 165–serine 167 and serine 190.

The protein belongs to the tetrahydrofolate dehydrogenase/cyclohydrolase family. As to quaternary structure, homodimer.

It catalyses the reaction (6R)-5,10-methylene-5,6,7,8-tetrahydrofolate + NADP(+) = (6R)-5,10-methenyltetrahydrofolate + NADPH. It carries out the reaction (6R)-5,10-methenyltetrahydrofolate + H2O = (6R)-10-formyltetrahydrofolate + H(+). It participates in one-carbon metabolism; tetrahydrofolate interconversion. Functionally, catalyzes the oxidation of 5,10-methylenetetrahydrofolate to 5,10-methenyltetrahydrofolate and then the hydrolysis of 5,10-methenyltetrahydrofolate to 10-formyltetrahydrofolate. This is Bifunctional protein FolD from Cupriavidus taiwanensis (strain DSM 17343 / BCRC 17206 / CCUG 44338 / CIP 107171 / LMG 19424 / R1) (Ralstonia taiwanensis (strain LMG 19424)).